Reading from the N-terminus, the 237-residue chain is Purine nucleoside phosphorylase DeoD-type (237 aa).

H4 serves as a coordination point for a purine D-ribonucleoside. Phosphate-binding positions include G20, R24, R43, and 87–90 (RVGS). A purine D-ribonucleoside is bound by residues 179 to 181 (EME) and 203 to 204 (SD). Catalysis depends on D204, which acts as the Proton donor.

It belongs to the PNP/UDP phosphorylase family. Homohexamer; trimer of homodimers.

The catalysed reaction is a purine D-ribonucleoside + phosphate = a purine nucleobase + alpha-D-ribose 1-phosphate. The enzyme catalyses a purine 2'-deoxy-D-ribonucleoside + phosphate = a purine nucleobase + 2-deoxy-alpha-D-ribose 1-phosphate. Its function is as follows. Catalyzes the reversible phosphorolytic breakdown of the N-glycosidic bond in the beta-(deoxy)ribonucleoside molecules, with the formation of the corresponding free purine bases and pentose-1-phosphate. This chain is Purine nucleoside phosphorylase DeoD-type, found in Dichelobacter nodosus (strain VCS1703A).